We begin with the raw amino-acid sequence, 172 residues long: Small ribosomal subunit protein uS5 (172 aa).

One can recognise an S5 DRBM domain in the interval 11-74 (LFESVVDIAR…RKAKGAMIRF (64 aa)).

This sequence belongs to the universal ribosomal protein uS5 family. As to quaternary structure, part of the 30S ribosomal subunit. Contacts proteins S4 and S8.

With S4 and S12 plays an important role in translational accuracy. Functionally, located at the back of the 30S subunit body where it stabilizes the conformation of the head with respect to the body. In Neorickettsia sennetsu (strain ATCC VR-367 / Miyayama) (Ehrlichia sennetsu), this protein is Small ribosomal subunit protein uS5.